The sequence spans 258 residues: Hydroxyacylglutathione hydrolase (258 aa).

Zn(2+) is bound by residues histidine 52, histidine 54, aspartate 56, histidine 57, histidine 109, aspartate 126, and histidine 164.

The protein belongs to the metallo-beta-lactamase superfamily. Glyoxalase II family. As to quaternary structure, monomer. Requires Zn(2+) as cofactor.

The enzyme catalyses an S-(2-hydroxyacyl)glutathione + H2O = a 2-hydroxy carboxylate + glutathione + H(+). It functions in the pathway secondary metabolite metabolism; methylglyoxal degradation; (R)-lactate from methylglyoxal: step 2/2. Thiolesterase that catalyzes the hydrolysis of S-D-lactoyl-glutathione to form glutathione and D-lactic acid. The polypeptide is Hydroxyacylglutathione hydrolase (Xylella fastidiosa (strain M12)).